Reading from the N-terminus, the 484-residue chain is Maintenance of mitochondrial morphology protein 1 (484 aa).

Residues 1–22 lie on the Lumenal side of the membrane; the sequence is MSFQQSETVPVPAQSSLSFTQG. The helical transmembrane segment at 23-43 threads the bilayer; that stretch reads FLLGQLSVVLLIGAFIKFFIF. Residues 44–484 are Cytoplasmic-facing; sequence GEAPPPPSRG…PGSLSGAAAR (441 aa). Disordered regions lie at residues 50 to 98, 272 to 319, and 388 to 484; these read PSRG…SSST, STPP…TGSP, and RTGV…AAAR. A compositionally biased stretch (basic residues) spans 54-64; it reads LSHRASTHRRS. 2 stretches are compositionally biased toward polar residues: residues 65–78 and 85–98; these read NSIYTINHNEANNR and SNSNVLRPVPSSST. In terms of domain architecture, SMP-LTD spans 130–380; the sequence is QPESLDWFNV…EPRVQVVGLP (251 aa). Over residues 272-286 the composition is skewed to pro residues; it reads STPPLHTPSPSPSPP. The span at 399 to 408 shows a compositional bias: polar residues; that stretch reads TGSNAASRSA. Positions 413-427 are enriched in basic and acidic residues; it reads LGDHHLGDREPEGLR. Composition is skewed to polar residues over residues 437-449 and 466-476; these read QFDSVSRTSSYNV and GALSEQFQMPG.

This sequence belongs to the MMM1 family. Homodimer. Component of the ER-mitochondria encounter structure (ERMES) or MDM complex, composed of mmm1, mdm10, mdm12 and mdm34. A mmm1 homodimer associates with one molecule of mdm12 on each side in a pairwise head-to-tail manner, and the SMP-LTD domains of mmm1 and mdm12 generate a continuous hydrophobic tunnel for phospholipid trafficking.

Its subcellular location is the endoplasmic reticulum membrane. Its function is as follows. Component of the ERMES/MDM complex, which serves as a molecular tether to connect the endoplasmic reticulum (ER) and mitochondria. Components of this complex are involved in the control of mitochondrial shape and protein biogenesis, and function in nonvesicular lipid trafficking between the ER and mitochondria. The mdm12-mmm1 subcomplex functions in the major beta-barrel assembly pathway that is responsible for biogenesis of all outer membrane beta-barrel proteins, and acts in a late step after the SAM complex. The mdm10-mdm12-mmm1 subcomplex further acts in the TOM40-specific pathway after the action of the mdm12-mmm1 complex. Essential for establishing and maintaining the structure of mitochondria and maintenance of mtDNA nucleoids. The sequence is that of Maintenance of mitochondrial morphology protein 1 from Aspergillus niger (strain ATCC MYA-4892 / CBS 513.88 / FGSC A1513).